A 143-amino-acid polypeptide reads, in one-letter code: Holo-[acyl-carrier-protein] synthase (143 aa).

Mg(2+) is bound by residues D9 and E63.

Belongs to the P-Pant transferase superfamily. AcpS family. Mg(2+) is required as a cofactor.

The protein localises to the cytoplasm. The enzyme catalyses apo-[ACP] + CoA = holo-[ACP] + adenosine 3',5'-bisphosphate + H(+). Its function is as follows. Transfers the 4'-phosphopantetheine moiety from coenzyme A to a Ser of acyl-carrier-protein. This is Holo-[acyl-carrier-protein] synthase from Burkholderia mallei (strain NCTC 10247).